The following is a 266-amino-acid chain: MRDMQMERDTRNIAIDKVGVKDIRYPIVVMDKNKDQQHTVARINMYVDLPHHFKGTHMSRFVEILNQYRGEITMRNMGELLQEMKNRLDASCAHLKMDFPYFIEKQAPVSKARSLMEYRCRLRGTLDKQKDFVLGVEVPLTALCPCSREISERGAHNQRSAVKVEVRMSKFIWIEDLISWIEECGSAPVYALLKREDEKAVTEQAYDNPMFVEDIVRAVTLKLKSAPEITWFRVECENFESIHNHSAYAMVEFPPRTEDAEPAPAP.

This sequence belongs to the GTP cyclohydrolase IV family.

The catalysed reaction is GTP + H2O = 7,8-dihydroneopterin 3'-triphosphate + formate + H(+). It participates in cofactor biosynthesis; 7,8-dihydroneopterin triphosphate biosynthesis; 7,8-dihydroneopterin triphosphate from GTP: step 1/1. Its function is as follows. Converts GTP to 7,8-dihydroneopterin triphosphate. This Syntrophotalea carbinolica (strain DSM 2380 / NBRC 103641 / GraBd1) (Pelobacter carbinolicus) protein is GTP cyclohydrolase FolE2.